The chain runs to 530 residues: Calcium-dependent protein kinase 14 (530 aa).

Residue glycine 2 is the site of N-myristoyl glycine attachment. Residues 54 to 312 form the Protein kinase domain; the sequence is YKLGRELGRG…AQQVLDHPWI (259 aa). ATP contacts are provided by residues 60 to 68 and lysine 83; that span reads LGRGEFGVT. Aspartate 178 functions as the Proton acceptor in the catalytic mechanism. A Phosphoserine modification is found at serine 218. An autoinhibitory domain region spans residues 318–348; the sequence is ASNVSLGETVRARLKQFSVMNKLKKRALRVI. 4 EF-hand domains span residues 355–390, 391–426, 427–462, and 463–498; these read EETSCIKERFQVMDTSNRGKITITELGIGLQKLGIV, VPQDDIQILMDAGDVDKDGYLDVNEFVAISVHIRKL, GNDEHLKKAFTFFDKNKSGYIEIEELRDALADDVDT, and TSEEVVEAIILDVDTNKDGKISYDEFATMMKTGTDW. Ca(2+) is bound by residues aspartate 368, serine 370, lysine 374, glutamate 379, aspartate 404, aspartate 406, aspartate 408, tyrosine 410, glutamate 415, aspartate 440, asparagine 442, serine 444, tyrosine 446, glutamate 451, aspartate 476, asparagine 478, aspartate 480, and lysine 482. Serine 484 bears the Phosphoserine mark. Glutamate 487 serves as a coordination point for Ca(2+).

Belongs to the protein kinase superfamily. Ser/Thr protein kinase family. CDPK subfamily.

It is found in the membrane. The catalysed reaction is L-seryl-[protein] + ATP = O-phospho-L-seryl-[protein] + ADP + H(+). The enzyme catalyses L-threonyl-[protein] + ATP = O-phospho-L-threonyl-[protein] + ADP + H(+). Activated by calcium. Autophosphorylation may play an important role in the regulation of the kinase activity. Its function is as follows. May play a role in signal transduction pathways that involve calcium as a second messenger. This Arabidopsis thaliana (Mouse-ear cress) protein is Calcium-dependent protein kinase 14 (CPK14).